A 100-amino-acid polypeptide reads, in one-letter code: Large ribosomal subunit protein bL27 (100 aa).

Residues 1 to 9 (MIIMNLQIF) constitute a propeptide that is removed on maturation. A disordered region spans residues 13–32 (KGMGSSKNGRDSESKRLGTK).

The protein belongs to the bacterial ribosomal protein bL27 family. Post-translationally, the N-terminus is cleaved by ribosomal processing cysteine protease Prp.

The sequence is that of Large ribosomal subunit protein bL27 from Clostridium kluyveri (strain ATCC 8527 / DSM 555 / NBRC 12016 / NCIMB 10680 / K1).